The primary structure comprises 221 residues: Putative N-acetylmannosamine-6-phosphate 2-epimerase (221 aa).

The protein belongs to the NanE family.

It catalyses the reaction an N-acyl-D-glucosamine 6-phosphate = an N-acyl-D-mannosamine 6-phosphate. It functions in the pathway amino-sugar metabolism; N-acetylneuraminate degradation; D-fructose 6-phosphate from N-acetylneuraminate: step 3/5. Its function is as follows. Converts N-acetylmannosamine-6-phosphate (ManNAc-6-P) to N-acetylglucosamine-6-phosphate (GlcNAc-6-P). In Clostridium perfringens (strain ATCC 13124 / DSM 756 / JCM 1290 / NCIMB 6125 / NCTC 8237 / Type A), this protein is Putative N-acetylmannosamine-6-phosphate 2-epimerase.